The primary structure comprises 282 residues: Bifunctional protein FolD (282 aa).

Residues 162–164 (GRS), S187, and V228 each bind NADP(+).

This sequence belongs to the tetrahydrofolate dehydrogenase/cyclohydrolase family. As to quaternary structure, homodimer.

It carries out the reaction (6R)-5,10-methylene-5,6,7,8-tetrahydrofolate + NADP(+) = (6R)-5,10-methenyltetrahydrofolate + NADPH. The enzyme catalyses (6R)-5,10-methenyltetrahydrofolate + H2O = (6R)-10-formyltetrahydrofolate + H(+). The protein operates within one-carbon metabolism; tetrahydrofolate interconversion. Catalyzes the oxidation of 5,10-methylenetetrahydrofolate to 5,10-methenyltetrahydrofolate and then the hydrolysis of 5,10-methenyltetrahydrofolate to 10-formyltetrahydrofolate. The protein is Bifunctional protein FolD of Thermus thermophilus (strain ATCC BAA-163 / DSM 7039 / HB27).